A 251-amino-acid polypeptide reads, in one-letter code: tRNA (guanine-N(1)-)-methyltransferase (251 aa).

S-adenosyl-L-methionine contacts are provided by residues Gly-117 and 137–142 (IGDYVL).

This sequence belongs to the RNA methyltransferase TrmD family. In terms of assembly, homodimer.

Its subcellular location is the cytoplasm. It carries out the reaction guanosine(37) in tRNA + S-adenosyl-L-methionine = N(1)-methylguanosine(37) in tRNA + S-adenosyl-L-homocysteine + H(+). Functionally, specifically methylates guanosine-37 in various tRNAs. The protein is tRNA (guanine-N(1)-)-methyltransferase of Actinobacillus pleuropneumoniae serotype 5b (strain L20).